The sequence spans 403 residues: UPF0229 protein CKR_0568 (403 aa).

The segment at 71–109 is disordered; it reads SSGVGSGDGSQKKGDRIGKAIKDRDGKGNQGAGNQEGED. Over residues 80 to 97 the composition is skewed to basic and acidic residues; sequence SQKKGDRIGKAIKDRDGK.

It belongs to the UPF0229 family.

The chain is UPF0229 protein CKR_0568 from Clostridium kluyveri (strain NBRC 12016).